Consider the following 1293-residue polypeptide: Phosphoribosylformylglycinamidine synthase (1293 aa).

ATP-binding positions include 305-316 and A676; that span reads GAATGSGGEIRD. Mg(2+)-binding residues include D677, E716, N720, and D884. S886 is an ATP binding site. Positions 1040-1293 constitute a Glutamine amidotransferase type-1 domain; it reads MAILREQGVN…MFRNARVKLG (254 aa). C1133 (nucleophile) is an active-site residue. Active-site residues include H1258 and E1260.

In the N-terminal section; belongs to the FGAMS family. In terms of assembly, monomer.

The protein resides in the cytoplasm. It carries out the reaction N(2)-formyl-N(1)-(5-phospho-beta-D-ribosyl)glycinamide + L-glutamine + ATP + H2O = 2-formamido-N(1)-(5-O-phospho-beta-D-ribosyl)acetamidine + L-glutamate + ADP + phosphate + H(+). It functions in the pathway purine metabolism; IMP biosynthesis via de novo pathway; 5-amino-1-(5-phospho-D-ribosyl)imidazole from N(2)-formyl-N(1)-(5-phospho-D-ribosyl)glycinamide: step 1/2. In terms of biological role, phosphoribosylformylglycinamidine synthase involved in the purines biosynthetic pathway. Catalyzes the ATP-dependent conversion of formylglycinamide ribonucleotide (FGAR) and glutamine to yield formylglycinamidine ribonucleotide (FGAM) and glutamate. The polypeptide is Phosphoribosylformylglycinamidine synthase (Shewanella denitrificans (strain OS217 / ATCC BAA-1090 / DSM 15013)).